We begin with the raw amino-acid sequence, 207 residues long: Cytochrome c biogenesis ATP-binding export protein CcmA (207 aa).

In terms of domain architecture, ABC transporter spans 2–204; sequence LEVKNLTAIR…NPKLRKIRLG (203 aa). 34 to 41 contacts ATP; it reads GRNGTGKT.

The protein belongs to the ABC transporter superfamily. CcmA exporter (TC 3.A.1.107) family. As to quaternary structure, the complex is composed of two ATP-binding proteins (CcmA) and two transmembrane proteins (CcmB).

It is found in the cell inner membrane. The enzyme catalyses heme b(in) + ATP + H2O = heme b(out) + ADP + phosphate + H(+). Functionally, part of the ABC transporter complex CcmAB involved in the biogenesis of c-type cytochromes; once thought to export heme, this seems not to be the case, but its exact role is uncertain. Responsible for energy coupling to the transport system. This is Cytochrome c biogenesis ATP-binding export protein CcmA from Vibrio cholerae serotype O1 (strain ATCC 39315 / El Tor Inaba N16961).